Here is a 302-residue protein sequence, read N- to C-terminus: Recombination-associated protein RdgC (302 aa).

The protein belongs to the RdgC family.

The protein resides in the cytoplasm. Its subcellular location is the nucleoid. May be involved in recombination. The chain is Recombination-associated protein RdgC from Xanthomonas campestris pv. campestris (strain 8004).